Here is a 374-residue protein sequence, read N- to C-terminus: Fibrous sheath-interacting protein 1 (374 aa).

Disordered stretches follow at residues 1-80 (MEVY…LEVL), 95-120 (EMTD…PEMR), and 225-244 (EVGQ…HSKS). 3 stretches are compositionally biased toward basic and acidic residues: residues 12–28 (PHSR…RDKS), 45–55 (DIIKGRLDEIS), and 65–77 (ENRR…HRSL). The stretch at 262–290 (SVFLTQQEKERIEDLLKDLEEELLEEPQL) forms a coiled coil.

Belongs to the FSIP1 family.

The sequence is that of Fibrous sheath-interacting protein 1 (fsip1) from Danio rerio (Zebrafish).